The sequence spans 282 residues: uncharacterized protein (282 aa).

A helical transmembrane segment spans residues 22-42; that stretch reads YLFTLGSFVTMFFVLCISPVF.

The protein resides in the cell membrane. This is an uncharacterized protein from Bacillus anthracis.